Consider the following 355-residue polypeptide: Phosphoribosylformylglycinamidine cyclo-ligase (355 aa).

This sequence belongs to the AIR synthase family.

It is found in the cytoplasm. The catalysed reaction is 2-formamido-N(1)-(5-O-phospho-beta-D-ribosyl)acetamidine + ATP = 5-amino-1-(5-phospho-beta-D-ribosyl)imidazole + ADP + phosphate + H(+). It functions in the pathway purine metabolism; IMP biosynthesis via de novo pathway; 5-amino-1-(5-phospho-D-ribosyl)imidazole from N(2)-formyl-N(1)-(5-phospho-D-ribosyl)glycinamide: step 2/2. The sequence is that of Phosphoribosylformylglycinamidine cyclo-ligase from Paraburkholderia xenovorans (strain LB400).